The following is a 328-amino-acid chain: Interleukin-12 subunit beta (328 aa).

An N-terminal signal peptide occupies residues 1–22 (MCHQQLVISWFSLVFLASPLMA). In terms of domain architecture, Ig-like C2-type spans 29-106 (DVYVVELDWY…LSHSLLLLHK (78 aa)). Cysteines 50 and 90 form a disulfide. N-linked (GlcNAc...) asparagine glycosylation is found at Asn-125, Asn-135, Asn-222, and Asn-303. Residues 237–328 (PPKNLQLKPL…WSEWASVPCS (92 aa)) form the Fibronectin type-III domain.

It belongs to the IL-12B family. Heterodimer with IL12A; disulfide-linked. The heterodimer is known as interleukin IL-12. Heterodimer with IL23A; disulfide-linked. The heterodimer is known as interleukin IL-23. Also secreted as a monomer. Interacts with NBR1; this interaction promotes IL-12 secretion.

The protein localises to the secreted. In terms of biological role, cytokine that can act as a growth factor for activated T and NK cells, enhance the lytic activity of NK/lymphokine-activated killer cells, and stimulate the production of IFN-gamma by resting PBMC. Associates with IL23A to form the IL-23 interleukin, a heterodimeric cytokine which functions in innate and adaptive immunity. IL-23 may constitute with IL-17 an acute response to infection in peripheral tissues. IL-23 binds to a heterodimeric receptor complex composed of IL12RB1 and IL23R, activates the Jak-Stat signaling cascade, stimulates memory rather than naive T-cells and promotes production of pro-inflammatory cytokines. IL-23 induces autoimmune inflammation and thus may be responsible for autoimmune inflammatory diseases and may be important for tumorigenesis. The protein is Interleukin-12 subunit beta (IL12B) of Papio anubis (Olive baboon).